The following is a 377-amino-acid chain: 26S proteasome non-ATPase regulatory subunit 4 (377 aa).

In terms of domain architecture, VWFA spans 5–188; the sequence is STMVCVDNSE…LADALISSPI (184 aa). Residue lysine 122 forms a Glycyl lysine isopeptide (Lys-Gly) (interchain with G-Cter in SUMO2) linkage. The interaction with UBQLN1 stretch occupies residues 197 to 262; sequence LGLGASDFEF…TEDSDDALLK (66 aa). A UIM 1 domain is found at 211–230; the sequence is SADPELALALRVSMEEQRQR. The interval 216–220 is essential for ubiquitin-binding; it reads LALAL. A compositionally biased stretch (basic and acidic residues) spans 224 to 237; it reads MEEQRQRQEEEARR. The segment at 224-255 is disordered; that stretch reads MEEQRQRQEEEARRAAAASAAEAGIATTGTED. Residues threonine 250 and threonine 253 each carry the phosphothreonine modification. Phosphoserine occurs at positions 256 and 266. In terms of domain architecture, UIM 2 spans 282–301; the sequence is TEEEQIAYAMQMSLQGAEFG. Residues 287 to 291 form an essential for ubiquitin-binding region; the sequence is IAYAM. Disordered stretches follow at residues 300-327 and 341-377; these read FGQAESADIDASSAMDTSEPAKEEDDYD and NLPGVDPNNEAIRNAMGSLASQATKDGKKDKKEEDKK. Serine 358 and serine 361 each carry phosphoserine. A compositionally biased stretch (basic and acidic residues) spans 365–377; it reads KDGKKDKKEEDKK.

This sequence belongs to the proteasome subunit S5A family. In terms of assembly, component of the 19S proteasome regulatory particle complex. The 26S proteasome consists of a 20S core particle (CP) and two 19S regulatory subunits (RP). The regulatory particle is made of a lid composed of 9 subunits, a base containing 6 ATPases and few additional components including PSMD4. Interacts with NUB1. Interacts with SQSTM1. Interacts with UBQLN4. Interacts with UBE3A. Interacts with UBQLN1 (via ubiquitin-like domain). Interacts with DDI2.

Its function is as follows. Component of the 26S proteasome, a multiprotein complex involved in the ATP-dependent degradation of ubiquitinated proteins. This complex plays a key role in the maintenance of protein homeostasis by removing misfolded or damaged proteins, which could impair cellular functions, and by removing proteins whose functions are no longer required. Therefore, the proteasome participates in numerous cellular processes, including cell cycle progression, apoptosis, or DNA damage repair. PSMD4 acts as an ubiquitin receptor subunit through ubiquitin-interacting motifs and selects ubiquitin-conjugates for destruction. Displays a preferred selectivity for longer polyubiquitin chains. The chain is 26S proteasome non-ATPase regulatory subunit 4 (PSMD4) from Homo sapiens (Human).